The following is a 56-amino-acid chain: UPF0391 membrane protein Rru_A0119 (56 aa).

A run of 2 helical transmembrane segments spans residues 4 to 24 and 30 to 50; these read WALI…GGIA and IAQI…IMHF.

The protein belongs to the UPF0391 family.

The protein resides in the cell membrane. In Rhodospirillum rubrum (strain ATCC 11170 / ATH 1.1.1 / DSM 467 / LMG 4362 / NCIMB 8255 / S1), this protein is UPF0391 membrane protein Rru_A0119.